We begin with the raw amino-acid sequence, 186 residues long: ATP synthase subunit delta, cyanelle (186 aa).

The protein belongs to the ATPase delta chain family. In terms of assembly, F-type ATPases have 2 components, F(1) - the catalytic core - and F(0) - the membrane proton channel. F(1) has five subunits: alpha(3), beta(3), gamma(1), delta(1), epsilon(1). CF(0) has four main subunits: a(1), b(1), b'(1) and c(10-14). The alpha and beta chains form an alternating ring which encloses part of the gamma chain. F(1) is attached to F(0) by a central stalk formed by the gamma and epsilon chains, while a peripheral stalk is formed by the delta, b and b' chains.

It localises to the plastid. It is found in the cyanelle thylakoid membrane. F(1)F(0) ATP synthase produces ATP from ADP in the presence of a proton or sodium gradient. F-type ATPases consist of two structural domains, F(1) containing the extramembraneous catalytic core and F(0) containing the membrane proton channel, linked together by a central stalk and a peripheral stalk. During catalysis, ATP synthesis in the catalytic domain of F(1) is coupled via a rotary mechanism of the central stalk subunits to proton translocation. Its function is as follows. This protein is part of the stalk that links CF(0) to CF(1). It either transmits conformational changes from CF(0) to CF(1) or is implicated in proton conduction. This Cyanophora paradoxa protein is ATP synthase subunit delta, cyanelle.